A 247-amino-acid chain; its full sequence is Small ribosomal subunit protein uS2 (247 aa).

It belongs to the universal ribosomal protein uS2 family.

This Ectopseudomonas mendocina (strain ymp) (Pseudomonas mendocina) protein is Small ribosomal subunit protein uS2.